Here is a 207-residue protein sequence, read N- to C-terminus: Small ribosomal subunit protein uS4 (207 aa).

The disordered stretch occupies residues 33–54 (KLDSKPGQHGRTSGARTSDYGN). The span at 42 to 53 (GRTSGARTSDYG) shows a compositional bias: polar residues. The 64-residue stretch at 97–160 (SRLDNVVYRM…KKQVRIAEAL (64 aa)) folds into the S4 RNA-binding domain.

The protein belongs to the universal ribosomal protein uS4 family. Part of the 30S ribosomal subunit. Contacts protein S5. The interaction surface between S4 and S5 is involved in control of translational fidelity.

Functionally, one of the primary rRNA binding proteins, it binds directly to 16S rRNA where it nucleates assembly of the body of the 30S subunit. Its function is as follows. With S5 and S12 plays an important role in translational accuracy. This Cupriavidus pinatubonensis (strain JMP 134 / LMG 1197) (Cupriavidus necator (strain JMP 134)) protein is Small ribosomal subunit protein uS4.